The chain runs to 477 residues: MLPPGSNGTAYPGQFALYQQLAQGNAVGGSAGAPPLGPSQVVTACLLTLLIIWTLLGNVLVCAAIVRSRHLRANMTNVFIVSLAVSDLFVALLVMPWKAVAEVAGYWPFGAFCDVWVAFDIMCSTASILNLCVISVDRYWAISRPFRYKRKMTQRMALVMVGLAWTLSILISFIPVQLNWHRDQAASWGGLDLPNNLANWTPWEEDFWEPDVNAENCDSSLNRTYAISSSLISFYIPVAIMIVTYTRIYRIAQVQIRRISSLERAAEHAQSCRSSAACAPDTSLRASIKKETKVLKTLSVIMGVFVCCWLPFFILNCMVPFCSGHPEGPPAGFPCVSETTFDVFVWFGWANSSLNPVIYAFNADFQKVFAQLLGCSHFCSRTPVETVNISNELISYNQDIVFHKEIAAAYIHMMPNAVTPGNREVDNDEEEGPFDRMFQIYQTSPDGDPVAESVWELDCEGEISLDKITPFTPNGFH.

Residues 1 to 39 (MLPPGSNGTAYPGQFALYQQLAQGNAVGGSAGAPPLGPS) are Extracellular-facing. The N-linked (GlcNAc...) asparagine glycan is linked to asparagine 7. The chain crosses the membrane as a helical span at residues 40 to 66 (QVVTACLLTLLIIWTLLGNVLVCAAIV). Over 67–77 (RSRHLRANMTN) the chain is Cytoplasmic. The helical transmembrane segment at 78–104 (VFIVSLAVSDLFVALLVMPWKAVAEVA) threads the bilayer. Residues 105-114 (GYWPFGAFCD) lie on the Extracellular side of the membrane. Residues cysteine 113 and cysteine 217 are joined by a disulfide bond. The chain crosses the membrane as a helical span at residues 115–136 (VWVAFDIMCSTASILNLCVISV). Over 137 to 158 (DRYWAISRPFRYKRKMTQRMAL) the chain is Cytoplasmic. Residues 159–180 (VMVGLAWTLSILISFIPVQLNW) traverse the membrane as a helical segment. Residues 181 to 223 (HRDQAASWGGLDLPNNLANWTPWEEDFWEPDVNAENCDSSLNR) are Extracellular-facing. Asparagine 222 carries an N-linked (GlcNAc...) asparagine glycan. The helical transmembrane segment at 224–246 (TYAISSSLISFYIPVAIMIVTYT) threads the bilayer. At 247 to 296 (RIYRIAQVQIRRISSLERAAEHAQSCRSSAACAPDTSLRASIKKETKVLK) the chain is on the cytoplasmic side. The helical transmembrane segment at 297–320 (TLSVIMGVFVCCWLPFFILNCMVP) threads the bilayer. Residues 321–340 (FCSGHPEGPPAGFPCVSETT) lie on the Extracellular side of the membrane. Residues 341–360 (FDVFVWFGWANSSLNPVIYA) form a helical membrane-spanning segment. The Cytoplasmic segment spans residues 361–477 (FNADFQKVFA…ITPFTPNGFH (117 aa)). Cysteine 375 carries S-palmitoyl cysteine lipidation.

The protein belongs to the G-protein coupled receptor 1 family. Neuron-specific, localized primarily within limbic regions of the brain.

The protein localises to the cell membrane. In terms of biological role, dopamine receptor whose activity is mediated by G proteins which activate adenylyl cyclase. This chain is D(1B) dopamine receptor (DRD5), found in Homo sapiens (Human).